A 380-amino-acid chain; its full sequence is Beta sliding clamp (380 aa).

Belongs to the beta sliding clamp family. Forms a ring-shaped head-to-tail homodimer around DNA which binds and tethers DNA polymerases and other proteins to the DNA. The DNA replisome complex has a single clamp-loading complex (3 tau and 1 each of delta, delta', psi and chi subunits) which binds 3 Pol III cores (1 core on the leading strand and 2 on the lagging strand) each with a beta sliding clamp dimer. Additional proteins in the replisome are other copies of gamma, psi and chi, Ssb, DNA helicase and RNA primase.

The protein resides in the cytoplasm. Its function is as follows. Confers DNA tethering and processivity to DNA polymerases and other proteins. Acts as a clamp, forming a ring around DNA (a reaction catalyzed by the clamp-loading complex) which diffuses in an ATP-independent manner freely and bidirectionally along dsDNA. Initially characterized for its ability to contact the catalytic subunit of DNA polymerase III (Pol III), a complex, multichain enzyme responsible for most of the replicative synthesis in bacteria; Pol III exhibits 3'-5' exonuclease proofreading activity. The beta chain is required for initiation of replication as well as for processivity of DNA replication. The chain is Beta sliding clamp (dnaN) from Mycoplasma pneumoniae (strain ATCC 29342 / M129 / Subtype 1) (Mycoplasmoides pneumoniae).